Reading from the N-terminus, the 971-residue chain is UPF0182 protein CMS1887 (971 aa).

7 consecutive transmembrane segments (helical) span residues 16-36 (LAIT…FAGF), 56-76 (WGAG…PVFV), 108-128 (LAMF…ASSG), 161-181 (FYHA…LGVL), 205-225 (IQIA…IWLD), 255-275 (TILA…AAIG), and 281-301 (IIGT…YPAI). Positions 687-702 (QDLWTTPNDPTATTEA) are enriched in polar residues. Disordered regions lie at residues 687–706 (QDLW…GTPA) and 874–924 (GATA…AQDV). Composition is skewed to low complexity over residues 884 to 900 (PTTP…TDGA) and 907 to 921 (STPT…AAPA).

It belongs to the UPF0182 family.

It localises to the cell membrane. This Clavibacter sepedonicus (Clavibacter michiganensis subsp. sepedonicus) protein is UPF0182 protein CMS1887.